Here is a 278-residue protein sequence, read N- to C-terminus: Large ribosomal subunit protein uL2 (278 aa).

The interval 201–278 is disordered; the sequence is HGNINDGKAG…IMRSRHQRKK (78 aa). The span at 210 to 221 shows a compositional bias: basic residues; that stretch reads GRSRWRGKRPHV.

The protein belongs to the universal ribosomal protein uL2 family. In terms of assembly, part of the 50S ribosomal subunit. Forms a bridge to the 30S subunit in the 70S ribosome.

Its function is as follows. One of the primary rRNA binding proteins. Required for association of the 30S and 50S subunits to form the 70S ribosome, for tRNA binding and peptide bond formation. It has been suggested to have peptidyltransferase activity; this is somewhat controversial. Makes several contacts with the 16S rRNA in the 70S ribosome. The sequence is that of Large ribosomal subunit protein uL2 from Sinorhizobium fredii (strain NBRC 101917 / NGR234).